A 589-amino-acid polypeptide reads, in one-letter code: Cytochrome P450 monooxygenase TRI13 (589 aa).

The N-terminal stretch at 1-21 (MFLSLCLMVLALYLLYKWALP) is a signal peptide. 4 N-linked (GlcNAc...) asparagine glycosylation sites follow: Asn-52, Asn-219, Asn-243, and Asn-366. Residue Cys-531 participates in heme binding.

It belongs to the cytochrome P450 family. The cofactor is heme.

The protein operates within sesquiterpene biosynthesis; trichothecene biosynthesis. Functionally, cytochrome P450 monooxygenase; part of the core gene cluster that mediates the biosynthesis of trichothecenes, a very large family of chemically related bicyclic sesquiterpene compounds acting as mycotoxins, including T2-toxin. The biosynthesis of trichothecenes begins with the cyclization of farnesyl diphosphate to trichodiene and is catalyzed by the trichodiene synthase TRI5. Trichodiene undergoes a series of oxygenations catalyzed by the cytochrome P450 monooxygenase TRI4. TRI4 controls the addition of four oxygens at C-2, C-3, C-11, and the C-12, C-13-epoxide to form the intermediate isotrichotriol. Isotrichotriol then undergoes a non-enzymatic isomerization and cyclization to form isotrichodermol. During this process, the oxygen at the C-2 position becomes the pyran ring oxygen and the hydroxyl group at C-11 is lost. More complex type A trichothecenes are built by modifying isotrichodermol through a series of paired hydroxylation and acetylation or acylation steps. Isotrichodermol is converted to isotrichodermin by the acetyltransferase TRI101. TRI101 encodes a C-3 transacetylase that acts as a self-protection or resistance factor during biosynthesis and that the presence of a free C-3 hydroxyl group is a key component of Fusarium trichothecene phytotoxicity. A second hydroxyl group is added to C-15 by the trichothecene C-15 hydroxylase TRI11, producing 15-decalonectrin, which is then acetylated by TRI3, producing calonectrin. A third hydroxyl group is added at C-4 by the cytochrome P450 monooxygenase TRI13, converting calonectrin to 3,15-diacetoxyspirpenol, which is subsequently acetylated by the acetyltransferase TRI7. A fourth hydroxyl group is added to C-8 by the cytochrome P450 monooxygenase TRI1, followed by the addition of an isovaleryl moiety by TRI16. Finally, the acetyl group is removed from the C-3 position by the trichothecene C-3 esterase TRI8 to produce T-2 toxin. This is Cytochrome P450 monooxygenase TRI13 from Fusarium sporotrichioides.